Consider the following 181-residue polypeptide: Translation initiation factor IF-3 (181 aa).

This sequence belongs to the IF-3 family. Monomer.

Its subcellular location is the cytoplasm. Functionally, IF-3 binds to the 30S ribosomal subunit and shifts the equilibrium between 70S ribosomes and their 50S and 30S subunits in favor of the free subunits, thus enhancing the availability of 30S subunits on which protein synthesis initiation begins. The chain is Translation initiation factor IF-3 from Idiomarina loihiensis (strain ATCC BAA-735 / DSM 15497 / L2-TR).